Reading from the N-terminus, the 241-residue chain is Hydantoin racemase (241 aa).

It belongs to the HyuE racemase family. In terms of assembly, homotetramer.

It catalyses the reaction a D-5-monosubstituted hydantoin = a L-5-monosubstituted hydantoin. The catalysed reaction is D-5-benzylhydantoin = L-5-benzylhydantoin. It carries out the reaction D-5-isobutylhydantoin = L-5-isobutylhydantoin. Its activity is regulated as follows. Inhibited by Cu(2+), Hg(2+), Pb(2+) and Zn(2+). The activity is twofold lower in the presence of Mn(2+), Co(2+) and Ni(2+). The insignificant effect of the metal chelating agent EDTA on the hydantoin racemase activity would indicate that it is not a metalloenzyme. Its function is as follows. May be involved in the asymmetric conversion of racemic 5-substituted hydantoins to the corresponding L-amino acids. Catalyzes the racemization via enolization of D- and L-5-monosubstituted hydantoins. The polypeptide is Hydantoin racemase (Rhizobium meliloti (Ensifer meliloti)).